The primary structure comprises 743 residues: Dolichyl-phosphooligosaccharide-protein glycotransferase 2 (743 aa).

Topologically, residues 1–7 (MKIDKRL) are cytoplasmic. A helical transmembrane segment spans residues 8-28 (MVIVAIATLFRMIPFRLKYLV). Residues 29–31 (GSD) carry the DXD motif 1 motif. The Extracellular segment spans residues 29 to 91 (GSDPYFHLAY…FSFLGISLYT (63 aa)). Residue aspartate 31 participates in Mn(2+) binding. The helical transmembrane segment at 92 to 112 (AFRVTPVIFGVLTVVFFYLSL) threads the bilayer. Residues 113–119 (KKLYNRD) are Cytoplasmic-facing. The helical transmembrane segment at 120 to 140 (VAFIVGLFLGVNYGHIFRSMA) threads the bilayer. At 141–144 (NYYR) the chain is on the extracellular side. Arginine 144 and aspartate 146 together coordinate Mn(2+). Positions 144–146 (RGD) match the DXD motif 2 motif. A helical transmembrane segment spans residues 145–165 (GDNYMLFWYSVALLGIALGLK). Residues 166 to 170 (TRSKY) lie on the Cytoplasmic side of the membrane. The next 2 helical transmembrane spans lie at 171–191 (RYLFYLLPGIATGFASAFWQA) and 192–212 (YYPIFVFVLAGGLLLGVYAYL). Topologically, residues 213–216 (KSPK) are cytoplasmic. The chain crosses the membrane as a helical span at residues 217–237 (LFLDSILIVLSTGLGVLIANI). Residues 238 to 272 (LGDKVGYGMLGYTDWMGKKVAETFGLEFGFIKDAY) are Extracellular-facing. Residues 273 to 293 (LLIHVKYLLPLSLVFLGFLII) traverse the membrane as a helical segment. Residues 294–302 (TKKLNPKIK) are Cytoplasmic-facing. Residues 303-323 (VGVLVGGSILAFIVMLVKFPA) traverse the membrane as a helical segment. Topologically, residues 324-345 (LKDLSTGFGTFREVPISETLPP) are extracellular. The TIXE motif signature appears at 333 to 336 (TFRE). The chain crosses the membrane as a helical span at residues 346–366 (TLDDLWRAYNIAIFLAALYIL). Over 367–373 (RLRKIRS) the chain is Cytoplasmic. The chain crosses the membrane as a helical span at residues 374-391 (GDAILLGYVITSLWMLRY). The Extracellular segment spans residues 392–394 (WTR). Residue arginine 394 participates in a glycophospholipid binding. A helical transmembrane segment spans residues 395–415 (FLFTAAPAVAFLSGIGVYELT). Topologically, residues 416-424 (RRIKENKIR) are cytoplasmic. Residues 425–445 (ITSLGVVILLSSAFSLGEVYS) traverse the membrane as a helical segment. At 446–743 (VKPFMNENWE…LDRGIVRVKN (298 aa)) the chain is on the extracellular side. Residues 474-476 (WWD) form an interacts with target acceptor peptide in protein substrate region. Positions 474–478 (WWDWG) match the WWDYG motif motif. Positions 526-533 (DILKFEAI) match the DK motif motif.

The protein belongs to the STT3 family. Mn(2+) is required as a cofactor. It depends on Mg(2+) as a cofactor.

Its subcellular location is the cell membrane. The enzyme catalyses an archaeal dolichyl phosphooligosaccharide + [protein]-L-asparagine = an archaeal dolichyl phosphate + a glycoprotein with the oligosaccharide chain attached by N-beta-D-glycosyl linkage to a protein L-asparagine.. Its pathway is protein modification; protein glycosylation. Functionally, oligosaccharyl transferase (OST) that catalyzes the initial transfer of a defined glycan (ManNAcXyl(2)GlcAMan(2)GalNAc in P.furiosus) from the lipid carrier dolichol-monophosphate to an asparagine residue within an Asn-X-Ser/Thr consensus motif in nascent polypeptide chains, the first step in protein N-glycosylation. This chain is Dolichyl-phosphooligosaccharide-protein glycotransferase 2 (aglB2), found in Pyrococcus furiosus (strain ATCC 43587 / DSM 3638 / JCM 8422 / Vc1).